The chain runs to 144 residues: Histone H2B.2, sperm (144 aa).

The tract at residues 1–51 (MPRSPSKTSPRKGSPRRGSPSRKASPKRGGKGAKRAGKGGRRRNVVRRRRR) is disordered. 5 consecutive short sequence motifs (SPKK motif) follow at residues 4–7 (SPSK), 9–12 (SPRK), 14–17 (SPRR), 19–22 (SPSR), and 25–28 (SPKR). S14, S19, and S25 each carry phosphoserine. A compositionally biased stretch (basic residues) spans 24–51 (ASPKRGGKGAKRAGKGGRRRNVVRRRRR). S131 carries O-linked (GlcNAc) serine glycosylation. Residue K139 forms a Glycyl lysine isopeptide (Lys-Gly) (interchain with G-Cter in ubiquitin) linkage.

Belongs to the histone H2B family. The nucleosome is a histone octamer containing two molecules each of H2A, H2B, H3 and H4 assembled in one H3-H4 heterotetramer and two H2A-H2B heterodimers. The octamer wraps approximately 147 bp of DNA. Monoubiquitination of Lys-139 gives a specific tag for epigenetic transcriptional activation and is also prerequisite for histone H3 'Lys-4' and 'Lys-79' methylation. Post-translationally, phosphorylated on SPKK motifs 3, 4 and 5; which may regulate DNA binding. Dephosphorylated during maturation of spermatids to mature sperm and rephosphorylated at fertilization. In terms of processing, glcNAcylation at Ser-131 promotes monoubiquitination of Lys-139. It fluctuates in response to extracellular glucose, and associates with transcribed genes.

The protein localises to the nucleus. The protein resides in the chromosome. Core component of nucleosome. Nucleosomes wrap and compact DNA into chromatin, limiting DNA accessibility to the cellular machineries which require DNA as a template. Histones thereby play a central role in transcription regulation, DNA repair, DNA replication and chromosomal stability. DNA accessibility is regulated via a complex set of post-translational modifications of histones, also called histone code, and nucleosome remodeling. In Strongylocentrotus purpuratus (Purple sea urchin), this protein is Histone H2B.2, sperm.